We begin with the raw amino-acid sequence, 288 residues long: Bifunctional protein FolD (288 aa).

NADP(+) contacts are provided by residues 166 to 168, Ser-191, and Val-232; that span reads GRS.

It belongs to the tetrahydrofolate dehydrogenase/cyclohydrolase family. As to quaternary structure, homodimer.

The catalysed reaction is (6R)-5,10-methylene-5,6,7,8-tetrahydrofolate + NADP(+) = (6R)-5,10-methenyltetrahydrofolate + NADPH. It catalyses the reaction (6R)-5,10-methenyltetrahydrofolate + H2O = (6R)-10-formyltetrahydrofolate + H(+). It participates in one-carbon metabolism; tetrahydrofolate interconversion. Functionally, catalyzes the oxidation of 5,10-methylenetetrahydrofolate to 5,10-methenyltetrahydrofolate and then the hydrolysis of 5,10-methenyltetrahydrofolate to 10-formyltetrahydrofolate. In Roseiflexus sp. (strain RS-1), this protein is Bifunctional protein FolD.